Reading from the N-terminus, the 232-residue chain is Ribose-5-phosphate isomerase A (232 aa).

Substrate is bound by residues 31-34, 87-90, and 100-103; these read TGST, DGAD, and KGGG. Glutamate 109 (proton acceptor) is an active-site residue. Lysine 127 is a binding site for substrate.

This sequence belongs to the ribose 5-phosphate isomerase family. Homodimer.

It catalyses the reaction aldehydo-D-ribose 5-phosphate = D-ribulose 5-phosphate. It participates in carbohydrate degradation; pentose phosphate pathway; D-ribose 5-phosphate from D-ribulose 5-phosphate (non-oxidative stage): step 1/1. Functionally, catalyzes the reversible conversion of ribose-5-phosphate to ribulose 5-phosphate. This Bifidobacterium longum subsp. infantis (strain ATCC 15697 / DSM 20088 / JCM 1222 / NCTC 11817 / S12) protein is Ribose-5-phosphate isomerase A.